We begin with the raw amino-acid sequence, 137 residues long: Transcription antitermination protein NusB (137 aa).

Belongs to the NusB family.

In terms of biological role, involved in transcription antitermination. Required for transcription of ribosomal RNA (rRNA) genes. Binds specifically to the boxA antiterminator sequence of the ribosomal RNA (rrn) operons. This chain is Transcription antitermination protein NusB, found in Borreliella afzelii (strain PKo) (Borrelia afzelii).